We begin with the raw amino-acid sequence, 653 residues long: Chaperone protein HtpG (653 aa).

The interval Met1 to Arg361 is a; substrate-binding. The interval Glu362–Lys578 is b. Residues Leu579–Lys653 form a c region.

Belongs to the heat shock protein 90 family. Homodimer.

The protein resides in the cytoplasm. In terms of biological role, molecular chaperone. Has ATPase activity. The chain is Chaperone protein HtpG from Colwellia psychrerythraea (strain 34H / ATCC BAA-681) (Vibrio psychroerythus).